We begin with the raw amino-acid sequence, 68 residues long: MKPSEIREMSIEEIDAKIRELRLQLAKERGMLTMGTSLENPMVIRNLRRDIARLLTIKKEKLREMGKK.

This sequence belongs to the universal ribosomal protein uL29 family.

The protein is Large ribosomal subunit protein uL29 (rpl29) of Pyrococcus horikoshii (strain ATCC 700860 / DSM 12428 / JCM 9974 / NBRC 100139 / OT-3).